Reading from the N-terminus, the 221-residue chain is Josephin-like protein (221 aa).

Residues 1-37 (MESPSARTLGNSLGDDSGNGNENGNGSGNGNTTMMPH) are disordered. Positions 9-20 (LGNSLGDDSGNG) are enriched in low complexity. The 179-residue stretch at 36 to 214 (PHGIYHERQT…DCKDKSQQRW (179 aa)) folds into the Josephin domain. Cys-49 functions as the Nucleophile in the catalytic mechanism. Catalysis depends on His-152, which acts as the Proton acceptor.

It catalyses the reaction Thiol-dependent hydrolysis of ester, thioester, amide, peptide and isopeptide bonds formed by the C-terminal Gly of ubiquitin (a 76-residue protein attached to proteins as an intracellular targeting signal).. Its function is as follows. May act as a deubiquitinating enzyme. The chain is Josephin-like protein from Drosophila melanogaster (Fruit fly).